Consider the following 555-residue polypeptide: Sulfite reductase [ferredoxin] (555 aa).

The segment at 1 to 22 (MTTARPAKARNEGQWALGHREP) is disordered. The segment at residues 69–161 (YTQREQGYDG…DVGLQTTEAC (93 aa)) is a cross-link (3'-(S-cysteinyl)-tyrosine (Tyr-Cys)). Cysteine 417, cysteine 423, cysteine 463, and cysteine 467 together coordinate [4Fe-4S] cluster. Siroheme is bound at residue cysteine 467.

This sequence belongs to the nitrite and sulfite reductase 4Fe-4S domain family. Monomer. The cofactor is siroheme. Requires [4Fe-4S] cluster as cofactor.

The enzyme catalyses hydrogen sulfide + 6 oxidized [2Fe-2S]-[ferredoxin] + 3 H2O = sulfite + 6 reduced [2Fe-2S]-[ferredoxin] + 7 H(+). Catalyzes the reduction of sulfite to sulfide, a step in the biosynthesis of sulfur-containing amino acids and cofactors. The polypeptide is Sulfite reductase [ferredoxin] (sir) (Mycobacterium bovis (strain ATCC BAA-935 / AF2122/97)).